Reading from the N-terminus, the 355-residue chain is UDP-3-O-acylglucosamine N-acyltransferase (355 aa).

His258 acts as the Proton acceptor in catalysis.

It belongs to the transferase hexapeptide repeat family. LpxD subfamily. Homotrimer.

It carries out the reaction a UDP-3-O-[(3R)-3-hydroxyacyl]-alpha-D-glucosamine + a (3R)-hydroxyacyl-[ACP] = a UDP-2-N,3-O-bis[(3R)-3-hydroxyacyl]-alpha-D-glucosamine + holo-[ACP] + H(+). Its pathway is bacterial outer membrane biogenesis; LPS lipid A biosynthesis. Catalyzes the N-acylation of UDP-3-O-acylglucosamine using 3-hydroxyacyl-ACP as the acyl donor. Is involved in the biosynthesis of lipid A, a phosphorylated glycolipid that anchors the lipopolysaccharide to the outer membrane of the cell. In Bradyrhizobium diazoefficiens (strain JCM 10833 / BCRC 13528 / IAM 13628 / NBRC 14792 / USDA 110), this protein is UDP-3-O-acylglucosamine N-acyltransferase.